Here is a 340-residue protein sequence, read N- to C-terminus: 4-amino-5-hydroxymethyl-2-methylpyrimidine phosphate synthase THI13 (340 aa).

K62 is subject to N6-(pyridoxal phosphate)lysine. H66 is an active-site residue. Pyridoxal 5'-phosphate is bound at residue 115 to 118; sequence GEFG. The short motif at 195–199 is the CCCFC; essential for catalytic activity, may be the site of iron coordination element; sequence CCCFC.

Belongs to the NMT1/THI5 family. As to quaternary structure, homodimer. It depends on Fe cation as a cofactor.

It carries out the reaction N(6)-(pyridoxal phosphate)-L-lysyl-[4-amino-5-hydroxymethyl-2-methylpyrimidine phosphate synthase] + L-histidyl-[4-amino-5-hydroxymethyl-2-methylpyrimidine phosphate synthase] + 2 Fe(3+) + 4 H2O = L-lysyl-[4-amino-5-hydroxymethyl-2-methylpyrimidine phosphate synthase] + (2S)-2-amino-5-hydroxy-4-oxopentanoyl-[4-amino-5-hydroxymethyl-2-methylpyrimidine phosphate synthase] + 4-amino-2-methyl-5-(phosphooxymethyl)pyrimidine + 3-oxopropanoate + 2 Fe(2+) + 2 H(+). The protein operates within cofactor biosynthesis; thiamine diphosphate biosynthesis. In terms of biological role, responsible for the formation of the pyrimidine heterocycle in the thiamine biosynthesis pathway. Catalyzes the formation of hydroxymethylpyrimidine phosphate (HMP-P) from histidine and pyridoxal phosphate (PLP). The protein uses PLP and the active site histidine to form HMP-P, generating an inactive enzyme. The enzyme can only undergo a single turnover, which suggests it is a suicide enzyme. The protein is 4-amino-5-hydroxymethyl-2-methylpyrimidine phosphate synthase THI13 of Saccharomyces cerevisiae (strain ATCC 204508 / S288c) (Baker's yeast).